A 316-amino-acid polypeptide reads, in one-letter code: Ribosomal protein L11 methyltransferase (316 aa).

The S-adenosyl-L-methionine site is built by T157, G178, D200, and N243.

This sequence belongs to the methyltransferase superfamily. PrmA family.

The protein resides in the cytoplasm. The catalysed reaction is L-lysyl-[protein] + 3 S-adenosyl-L-methionine = N(6),N(6),N(6)-trimethyl-L-lysyl-[protein] + 3 S-adenosyl-L-homocysteine + 3 H(+). Functionally, methylates ribosomal protein L11. This chain is Ribosomal protein L11 methyltransferase, found in Streptococcus pneumoniae (strain Hungary19A-6).